A 396-amino-acid polypeptide reads, in one-letter code: MAKKIVSDLDLKGKVVLERADFNVPIKDGEITNDNRIVQALPTIEYIIEQGGKLVLFSHLGKVKEESDKEGLSLKPVAENLSKKLGKEVIFVPETRGEKLETAIENLNEGDVLLVENTRFEDLDGKKESKNDPELGKYWASLGDVFVNDAFGTAHREHASNVGISTHLETAAGYLMEKEIKFIGGVVNDPQKPVVAILGGAKVSDKINVIKNLVNIADKILIGGGMAYTFIKAQGKEIGLSLLEEDKIDFAKDLLENNGDQIVLPVDCKIAKEFSNDAKITEVSINEIPSDQEAMDIGPKTVELFNKELQGAHTVVWNGPMGVFEFSNFAKGTIGVCESIAKLEDATTIIGGGDSAAAAISLGFEDDFTHISTGGGASLEYLEGKELPGIKAINDK.

Substrate contacts are provided by residues 21 to 23 (DFN), Arg-36, 59 to 62 (HLGK), Arg-119, and Arg-156. Residues Lys-206, Glu-325, and 352 to 355 (GGDS) each bind ATP.

It belongs to the phosphoglycerate kinase family. As to quaternary structure, monomer.

Its subcellular location is the cytoplasm. It catalyses the reaction (2R)-3-phosphoglycerate + ATP = (2R)-3-phospho-glyceroyl phosphate + ADP. It functions in the pathway carbohydrate degradation; glycolysis; pyruvate from D-glyceraldehyde 3-phosphate: step 2/5. The polypeptide is Phosphoglycerate kinase (Staphylococcus epidermidis (strain ATCC 35984 / DSM 28319 / BCRC 17069 / CCUG 31568 / BM 3577 / RP62A)).